The primary structure comprises 394 residues: Potassium channel subfamily K member 3 (394 aa).

At 1–8 the chain is on the cytoplasmic side; sequence MKRQNVRT. Residues 9 to 29 traverse the membrane as a helical segment; it reads LALIVCTFTYLLVGAAVFDAL. N-linked (GlcNAc...) asparagine glycosylation occurs at Asn-53. An intramembrane region (pore-forming) is located at residues 78-101; sequence WRFAGSFYFAITVITTIGYGHAAP. K(+) contacts are provided by Thr-93, Ile-94, Gly-95, and Tyr-96. Residues 93–98 form a selectivity filter 1 region; the sequence is TIGYGH. The helical transmembrane segment at 108-128 threads the bilayer; the sequence is VFCMFYALLGIPLTLVMFQSL. The Cytoplasmic portion of the chain corresponds to 129-158; sequence GERINTLVRYLLHRAKKGLGMRRADVSMAN. The chain crosses the membrane as a helical span at residues 159–179; that stretch reads MVLIGFFSCISTLCIGAAAFS. Positions 184–207 form an intramembrane region, pore-forming; sequence WTFFQAYYYCFITLTTIGFGDYVA. The K(+) site is built by Thr-199, Ile-200, Gly-201, and Phe-202. Positions 199–204 are selectivity filter 2; sequence TIGFGD. A helical transmembrane segment spans residues 223 to 243; that stretch reads FSFVYILTGLTVIGAFLNLVV. The X-gate stretch occupies residues 243–248; that stretch reads VLRFMT. At 244–394 the chain is on the cytoplasmic side; it reads LRFMTMNAED…RGLMKRRSSV (151 aa). Disordered stretches follow at residues 266–286 and 338–357; these read RNGQAGGGGGGGSAHTTDTAS and TCVEQSHSSPGGGGRYSDTP. Residues 269 to 278 show a composition bias toward gly residues; it reads QAGGGGGGGS.

It belongs to the two pore domain potassium channel (TC 1.A.1.8) family. In terms of assembly, homodimer. Heterodimer with KCNK1. Heterodimer with KCNK9. As to expression, widespread expression in adult. Strongest expression in pancreas and placenta. Lower expression in brain, lung, prostate, heart, kidney, uterus, small intestine and colon.

The protein localises to the cell membrane. It catalyses the reaction K(+)(in) = K(+)(out). The enzyme catalyses Na(+)(in) = Na(+)(out). Its activity is regulated as follows. Inhibited by external acidification, diacylglycerol and anandamide. Activated by halothane and isoflurane. In terms of biological role, k(+) channel that conducts voltage-dependent outward rectifying currents upon membrane depolarization. Voltage sensing is coupled to K(+) electrochemical gradient in an 'ion flux gating' mode where outward but not inward ion flow opens the gate. Changes ion selectivity and becomes permeable to Na(+) ions in response to extracellular acidification. Protonation of the pH sensor His-98 stabilizes C-type inactivation conformation likely converting the channel from outward K(+)-conducting, to inward Na(+)-conducting to nonconductive state. Homo- and heterodimerizes to form functional channels with distinct regulatory and gating properties. Allows K(+) currents with fast-gating kinetics important for the repolarization and hyperpolarization phases of action potentials. In cerebellar granule cells, heteromeric KCNK3:KCNK9 channel may hyperpolarize the resting membrane potential to limit intrinsic neuronal excitability, but once the action potential threshold is reached, it may support high-frequency action potential firing and increased neuronal excitability. Dispensable for central chemosensory respiration i.e. breathing controlled by brainstem CO2/pH, it rather conducts pH-sensitive currents and controls the firing rate of serotonergic raphe neurons involved in potentiation of the respiratory chemoreflex. Additionally, imparts chemosensitivity to type 1 cells in carotid bodies which respond to a decrease in arterial oxygen pressure or an increase in carbon dioxide pressure or pH to initiate adaptive changes in pulmonary ventilation. In adrenal gland, contributes to the maintenance of a hyperpolarized resting membrane potential of aldosterone-producing cells at zona glomerulosa and limits aldosterone release as part of a regulatory mechanism that controls arterial blood pressure and electrolyte homeostasis. In brown adipocytes, mediates K(+) efflux that counteracts norepinephrine-induced membrane depolarization, limits Ca(2+) efflux and downstream cAMP and PKA signaling, ultimately attenuating lipid oxidation and adaptive thermogenesis. The chain is Potassium channel subfamily K member 3 from Homo sapiens (Human).